Consider the following 124-residue polypeptide: Non-structural protein 2 (124 aa).

The short motif at 121–124 (DLNP) is the DLNP; interaction with MAP1B element.

The protein belongs to the pneumovirus non-structural protein 2 family. As to quaternary structure, monomer (instable). Homomultimer. Heteromultimer with NS1. Interacts with host RIGI (via N-terminus); this interaction prevents host signaling pathway involved in interferon production. Interacts with host MAP1B/microtubule-associated protein 1B.

It is found in the host mitochondrion. In terms of biological role, plays a major role in antagonizing the type I IFN-mediated antiviral response. Acts cooperatively with NS1 to repress activation and nuclear translocation of host IFN-regulatory factor IRF3. Interacts with the host cytoplasmic sensor of viral nucleic acids RIGI and prevents the interaction with its downstream partner MAVS. Together with NS2, participates in the proteasomal degradation of host STAT2, IRF3, IRF7, TBK1 and RIGI through a NS-degradasome involving CUL2 and Elongin-C. The degradasome requires an intact mitochondrial MAVS. Induces host SOCS1 expression. Induces activation of NF-kappa-B. Suppresses premature apoptosis by an NF-kappa-B-dependent, interferon-independent mechanism promoting continued viral replication. This Human respiratory syncytial virus A (strain A2) protein is Non-structural protein 2 (1B).